Consider the following 227-residue polypeptide: Ribosomal RNA large subunit methyltransferase E (227 aa).

S-adenosyl-L-methionine is bound by residues Gly-78, Trp-80, Asp-103, Asp-119, and Asp-143. Residue Lys-183 is the Proton acceptor of the active site.

Belongs to the class I-like SAM-binding methyltransferase superfamily. RNA methyltransferase RlmE family.

Its subcellular location is the cytoplasm. It carries out the reaction uridine(2552) in 23S rRNA + S-adenosyl-L-methionine = 2'-O-methyluridine(2552) in 23S rRNA + S-adenosyl-L-homocysteine + H(+). Specifically methylates the uridine in position 2552 of 23S rRNA at the 2'-O position of the ribose in the fully assembled 50S ribosomal subunit. The sequence is that of Ribosomal RNA large subunit methyltransferase E from Rickettsia conorii (strain ATCC VR-613 / Malish 7).